Reading from the N-terminus, the 748-residue chain is Rho GTPase-activating protein 24 (748 aa).

The segment at 1–20 (MEENNDSTENPQQGQGRQNA) is disordered. Over residues 7 to 18 (STENPQQGQGRQ) the composition is skewed to polar residues. The region spanning 19 to 125 (NAIKCGWLRK…WVKSIRRVIW (107 aa)) is the PH domain. In terms of domain architecture, Rho-GAP spans 135–329 (QKLEDTVRYE…VMISKHDCLF (195 aa)). Disordered stretches follow at residues 354 to 476 (TMGQ…GTHS) and 582 to 641 (DFFG…SSNH). Composition is skewed to polar residues over residues 356–374 (GQLQ…SRQC) and 382–405 (PQRS…SPKN). Residues Ser369, Ser391, Ser396, Ser398, Ser402, Ser413, Ser415, and Ser437 each carry the phosphoserine modification. The segment covering 432-476 (IVTNGSFSSSNAEGLEKTQTTPNGSLQARRSSSLKVSGTKMGTHS) has biased composition (polar residues). Thr452 carries the post-translational modification Phosphothreonine. A compositionally biased stretch (basic and acidic residues) spans 600–615 (DLSHPRDYESKSDHRS). The segment covering 617-641 (GGRSSRATSSSDNSETFVGNSSSNH) has biased composition (low complexity). Positions 649-729 (SSLKQEMTKQ…KEMEQFFSTF (81 aa)) form a coiled coil.

Interacts with FLNA. Post-translationally, phosphorylated by ROCK, leading to activate the RacGAP activity. Isoform 1 is widely expressed with a higher level in kidney. Isoform 2 is mainly expressed in endothelial cells.

Its subcellular location is the cytoplasm. It localises to the cytoskeleton. The protein resides in the cell junction. It is found in the adherens junction. The protein localises to the focal adhesion. Its subcellular location is the cell projection. Rho GTPase-activating protein involved in cell polarity, cell morphology and cytoskeletal organization. Acts as a GTPase activator for the Rac-type GTPase by converting it to an inactive GDP-bound state. Controls actin remodeling by inactivating Rac downstream of Rho leading to suppress leading edge protrusion and promotes cell retraction to achieve cellular polarity. Able to suppress RAC1 and CDC42 activity in vitro. Overexpression induces cell rounding with partial or complete disruption of actin stress fibers and formation of membrane ruffles, lamellipodia, and filopodia. Isoform 2 is a vascular cell-specific GAP involved in modulation of angiogenesis. In Homo sapiens (Human), this protein is Rho GTPase-activating protein 24 (ARHGAP24).